Consider the following 199-residue polypeptide: Protein-methionine-sulfoxide reductase heme-binding subunit MsrQ (199 aa).

Transmembrane regions (helical) follow at residues 8–28 (IAWL…WLFW), 54–74 (FLLA…PLLI), 82–102 (LWCF…ELGI), 116–136 (PYLT…ATST), 149–169 (LLHN…LWSV), and 171–191 (IVSP…ACRY).

The protein belongs to the MsrQ family. In terms of assembly, heterodimer of a catalytic subunit (MsrP) and a heme-binding subunit (MsrQ). Requires FMN as cofactor. Heme b is required as a cofactor.

It localises to the cell inner membrane. In terms of biological role, part of the MsrPQ system that repairs oxidized periplasmic proteins containing methionine sulfoxide residues (Met-O), using respiratory chain electrons. Thus protects these proteins from oxidative-stress damage caused by reactive species of oxygen and chlorine generated by the host defense mechanisms. MsrPQ is essential for the maintenance of envelope integrity under bleach stress, rescuing a wide series of structurally unrelated periplasmic proteins from methionine oxidation. MsrQ provides electrons for reduction to the reductase catalytic subunit MsrP, using the quinone pool of the respiratory chain. The chain is Protein-methionine-sulfoxide reductase heme-binding subunit MsrQ from Klebsiella pneumoniae (strain 342).